The primary structure comprises 1024 residues: Error-prone DNA polymerase (1024 aa).

This sequence belongs to the DNA polymerase type-C family. DnaE2 subfamily.

It is found in the cytoplasm. It carries out the reaction DNA(n) + a 2'-deoxyribonucleoside 5'-triphosphate = DNA(n+1) + diphosphate. Its function is as follows. DNA polymerase involved in damage-induced mutagenesis and translesion synthesis (TLS). It is not the major replicative DNA polymerase. The polypeptide is Error-prone DNA polymerase (Vibrio vulnificus (strain YJ016)).